The chain runs to 541 residues: MDSRRSLLVIALLFISFLVYQQWQLDYHTPKPVATEQVKVSSDVPASSASSSSDIATTAQAQGRIITLENDVFRLEVDTLGGDVVHSELLKYDAELNSNTPFTLLTNKANHVYIAQSGLVGKDGIDTKAGRANYQVDGDTFKLADGQNELAVPFVFEKDGVTFRKIFVLKRGAYDIAVNFEIDNQSDKTIEVEPYGQLRHTLVEDTGNVAMPTYTGGAYSSSETNYKKYSFADMEKANLSISTKAGWVAVLQHYFVSAWIPNQDADNQLYSLTDKANNLASIGYRGPVTAIPAGAKETIRSSLWTGPKLQDQMATVANHLDLSVDYGWAWFIAKPLFWLLTFIQSIVQNWGLAIIGVTLVVKAILYPLTKAQYTSMAKMRMLQPKLQEMRERFGEDRQRMSQEMMKLYKEEKVNPLGGCLPILLQMPIFIALYWTFLEAVELRHAPFFGWIQDLSAQDPYYILPILMGASMFLLQKMSPTPVADPTQQKIMNFMPLIFMVFFLWFPSGLVLYWLVSNLITIAQQQLIYRGLEKKGLHSRHK.

5 helical membrane passes run 7–27, 346–368, 416–436, 454–474, and 495–515; these read LLVIALLFISFLVYQQWQLDY, IVQNWGLAIIGVTLVVKAILYPL, LGGCLPILLQMPIFIALYWTF, LSAQDPYYILPILMGASMFLL, and PLIFMVFFLWFPSGLVLYWLV.

This sequence belongs to the OXA1/ALB3/YidC family. Type 1 subfamily. As to quaternary structure, interacts with the Sec translocase complex via SecD. Specifically interacts with transmembrane segments of nascent integral membrane proteins during membrane integration.

The protein localises to the cell inner membrane. Functionally, required for the insertion and/or proper folding and/or complex formation of integral membrane proteins into the membrane. Involved in integration of membrane proteins that insert both dependently and independently of the Sec translocase complex, as well as at least some lipoproteins. Aids folding of multispanning membrane proteins. In Pasteurella multocida (strain Pm70), this protein is Membrane protein insertase YidC.